Consider the following 203-residue polypeptide: Peptidyl-tRNA hydrolase (203 aa).

Tyr18 is a tRNA binding site. Residue His23 is the Proton acceptor of the active site. TRNA is bound by residues Phe69, Asn71, and Asn117.

It belongs to the PTH family. As to quaternary structure, monomer.

It is found in the cytoplasm. The catalysed reaction is an N-acyl-L-alpha-aminoacyl-tRNA + H2O = an N-acyl-L-amino acid + a tRNA + H(+). Hydrolyzes ribosome-free peptidyl-tRNAs (with 1 or more amino acids incorporated), which drop off the ribosome during protein synthesis, or as a result of ribosome stalling. In terms of biological role, catalyzes the release of premature peptidyl moieties from peptidyl-tRNA molecules trapped in stalled 50S ribosomal subunits, and thus maintains levels of free tRNAs and 50S ribosomes. The chain is Peptidyl-tRNA hydrolase from Prochlorococcus marinus subsp. pastoris (strain CCMP1986 / NIES-2087 / MED4).